Reading from the N-terminus, the 141-residue chain is Large ribosomal subunit protein bL17 (141 aa).

The protein belongs to the bacterial ribosomal protein bL17 family. As to quaternary structure, part of the 50S ribosomal subunit. Contacts protein L32.

This is Large ribosomal subunit protein bL17 from Rhizobium meliloti (strain 1021) (Ensifer meliloti).